The primary structure comprises 443 residues: Serine/threonine-protein kinase Nek2 (443 aa).

Positions 8 to 271 constitute a Protein kinase domain; the sequence is YEVLHSIGTG…VEEILESPLI (264 aa). Residues 14-22 and Lys-37 contribute to the ATP site; that span reads IGTGSYGRC. Catalysis depends on Asp-141, which acts as the Proton acceptor. Residue Thr-170 is modified to Phosphothreonine; by autocatalysis. A Phosphoserine; by autocatalysis modification is found at Ser-171. 2 positions are modified to phosphothreonine; by autocatalysis: Thr-175 and Thr-179. Residue Ser-184 is modified to Phosphoserine. Ser-241 carries the phosphoserine; by autocatalysis modification. The segment at 264–443 is interaction with PCNT; it reads EILESPLIAD…LKSRQILGMR (180 aa). Residues 282 to 292 are compositionally biased toward basic and acidic residues; it reads NLERRGRRSGE. The tract at residues 282–303 is disordered; that stretch reads NLERRGRRSGEPSKLPDSSPVL. Ser-300 is subject to Phosphoserine. An interaction with CEP85 region spans residues 301–443; it reads PVLSELKLKE…LKSRQILGMR (143 aa). Residues 303–361 are a coiled coil; sequence LSELKLKERQLQDREQALRAREDILEQKERELCIRERLAEDKLARAESLMKNYSLLKEH. The tract at residues 306-334 is leucine-zipper; it reads LKLKERQLQDREQALRAREDILEQKEREL. Positions 329-443 are necessary for interaction with MAD1L1; sequence QKERELCIRE…LKSRQILGMR (115 aa). The interval 333 to 370 is required for microtubule binding and for localization to the centrosomes; the sequence is ELCIRERLAEDKLARAESLMKNYSLLKEHRLLCLAGGP. Ser-356 bears the Phosphoserine; by STK3/MST2 mark. Residues 383–402 form a disordered region; it reads VHFHGESKENTARSENSESY. Residues 385–398 show a composition bias toward basic and acidic residues; that stretch reads FHGESKENTARSEN. Residues Ser-389, Ser-396, and Ser-401 each carry the phosphoserine modification. The tract at residues 402 to 437 is interaction with SAV1 and STK3/MST2; sequence YLAKSKCRDLKKRLHAAQLRAQALADIEKNYQLKSR. The stretch at 403–427 forms a coiled coil; the sequence is LAKSKCRDLKKRLHAAQLRAQALAD. Residue Ser-436 is modified to Phosphoserine; by STK3/MST2.

It belongs to the protein kinase superfamily. NEK Ser/Thr protein kinase family. NIMA subfamily. In terms of assembly, forms homodimers and heterodimers. Interacts with CDC20, CTNB1, MAD1L1, MAD2L1, MAPK, NEK11, NPM1, NDC80, PCNT, PPP1CA, PPP1CC and SGO1. Interacts with STK3/MST2 (via SARAH domain) and SAV1 (via SARAH domain). Interacts with NECAB3 and HMGA2. Interacts with CEP68; the interaction leads to phosphorylation of CEP68. Interacts with CNTLN; the interaction leads to phosphorylation of CNTLN. Interacts with CEP85. Requires Mg(2+) as cofactor. Post-translationally, activated by autophosphorylation. Protein phosphatase 1 represses autophosphorylation and activation of isoform 1 by dephosphorylation. Phosphorylation by STK3/MST2 is necessary for its localization to the centrosome. In terms of tissue distribution, most abundantly expressed in testis. Low levels found in mid-gestation embryo, ovary, placenta, intestine, thymus and skin. Within the testis, expression restricted to germ cells with highest levels detected in spermatocytes at pachytene and diplotene stages. Also expressed in meiotic pachytene oocytes.

It localises to the nucleus. It is found in the nucleolus. The protein localises to the cytoplasm. Its subcellular location is the cytoskeleton. The protein resides in the microtubule organizing center. It localises to the centrosome. It is found in the spindle pole. The protein localises to the chromosome. Its subcellular location is the centromere. The protein resides in the kinetochore. It carries out the reaction L-seryl-[protein] + ATP = O-phospho-L-seryl-[protein] + ADP + H(+). It catalyses the reaction L-threonyl-[protein] + ATP = O-phospho-L-threonyl-[protein] + ADP + H(+). Its catalytic activity is inhibited by the inhibitor CCT241950. In the presence of this inhibitor, displays an autoinhibited conformation: Tyr-70 side chain points into the active site, interacts with the activation loop, and blocks the alphaC helix. Its function is as follows. Protein kinase which is involved in the control of centrosome separation and bipolar spindle formation in mitotic cells and chromatin condensation in meiotic cells. Regulates centrosome separation (essential for the formation of bipolar spindles and high-fidelity chromosome separation) by phosphorylating centrosomal proteins such as CROCC, CEP250 and NINL, resulting in their displacement from the centrosomes. Regulates kinetochore microtubule attachment stability in mitosis via phosphorylation of NDC80. Involved in regulation of mitotic checkpoint protein complex via phosphorylation of CDC20 and MAD2L1. Plays an active role in chromatin condensation during the first meiotic division through phosphorylation of HMGA2. Phosphorylates: PPP1CC; SGO1; NECAB3 and NPM1. Essential for localization of MAD2L1 to kinetochore and MAPK1 and NPM1 to the centrosome. Phosphorylates CEP68 and CNTLN directly or indirectly. NEK2-mediated phosphorylation of CEP68 promotes CEP68 dissociation from the centrosome and its degradation at the onset of mitosis. Phosphorylates and activates NEK11 in G1/S-arrested cells. Involved in the regulation of centrosome disjunction. The protein is Serine/threonine-protein kinase Nek2 (Nek2) of Mus musculus (Mouse).